The chain runs to 513 residues: E3 ubiquitin-protein ligase RNF25 (513 aa).

Residues 9–117 (SEIEVLQSIY…ERAKEILTDS (109 aa)) enclose the RWD domain. Residues Cys-124, Cys-127, Cys-142, His-144, His-147, Cys-150, Cys-187, and Cys-190 each contribute to the Zn(2+) site. The RING-type; atypical zinc finger occupies 124 to 191 (CVICLYDFKE…ELAVVCPVCR (68 aa)). Residues 261-513 (NLSDTPGMTD…EKEFRKEGVL (253 aa)) are disordered. Positions 271-297 (SSGAESSQSLPSSSPDSTSTTQTSQNQ) are enriched in low complexity. Polar residues-rich tracts occupy residues 345 to 397 (SDKI…QDML) and 406 to 423 (EVSQ…QTIL). Residues 426-440 (GHPEREHVGRGDKRG) are compositionally biased toward basic and acidic residues. Positions 482-498 (AGRGHRGGGAYRGGGRG) are enriched in gly residues. The segment covering 501-513 (QRVEKEFRKEGVL) has biased composition (basic and acidic residues).

It belongs to the RNF25 family.

It is found in the cytoplasm. It carries out the reaction S-ubiquitinyl-[E2 ubiquitin-conjugating enzyme]-L-cysteine + [acceptor protein]-L-lysine = [E2 ubiquitin-conjugating enzyme]-L-cysteine + N(6)-ubiquitinyl-[acceptor protein]-L-lysine.. Its pathway is protein modification; protein ubiquitination. Functionally, E3 ubiquitin-protein ligase that plays a key role in the RNF14-RNF25 translation quality control pathway, a pathway that takes place when a ribosome has stalled during translation, and which promotes ubiquitination and degradation of translation factors on stalled ribosomes. May also acts as a positive regulator of the Wnt signaling. This chain is E3 ubiquitin-protein ligase RNF25, found in Danio rerio (Zebrafish).